A 376-amino-acid polypeptide reads, in one-letter code: Probable sister chromatid cohesion protein DCC1 (376 aa).

Residues 213–232 (QKSPTNSGGGGEEIKGGGGD) are disordered. Over residues 219-232 (SGGGGEEIKGGGGD) the composition is skewed to gly residues.

It belongs to the DCC1 family.

The protein localises to the nucleus. In terms of biological role, loads PCNA onto primed templates regulating velocity, spacing and restart activity of replication forks. May couple DNA replication to sister chromatid cohesion. This chain is Probable sister chromatid cohesion protein DCC1, found in Dictyostelium discoideum (Social amoeba).